The following is a 198-amino-acid chain: Nucleoid occlusion factor SlmA (198 aa).

The HTH tetR-type domain maps to Asn-10 to Leu-70. Residues Thr-33 to Phe-52 constitute a DNA-binding region (H-T-H motif). Residues Glu-117–Arg-144 are a coiled coil.

Belongs to the nucleoid occlusion factor SlmA family. As to quaternary structure, homodimer. Interacts with FtsZ.

Its subcellular location is the cytoplasm. It is found in the nucleoid. Required for nucleoid occlusion (NO) phenomenon, which prevents Z-ring formation and cell division over the nucleoid. Acts as a DNA-associated cell division inhibitor that binds simultaneously chromosomal DNA and FtsZ, and disrupts the assembly of FtsZ polymers. SlmA-DNA-binding sequences (SBS) are dispersed on non-Ter regions of the chromosome, preventing FtsZ polymerization at these regions. The chain is Nucleoid occlusion factor SlmA from Salmonella paratyphi A (strain ATCC 9150 / SARB42).